A 118-amino-acid polypeptide reads, in one-letter code: Large ribosomal subunit protein uL18 (118 aa).

Positions 1–24 are disordered; sequence MITKPDKNKIRQKRHRRVRGKLSG. Residues 10–20 are compositionally biased toward basic residues; it reads IRQKRHRRVRG.

Belongs to the universal ribosomal protein uL18 family. Part of the 50S ribosomal subunit; part of the 5S rRNA/L5/L18/L25 subcomplex. Contacts the 5S and 23S rRNAs.

Functionally, this is one of the proteins that bind and probably mediate the attachment of the 5S RNA into the large ribosomal subunit, where it forms part of the central protuberance. The sequence is that of Large ribosomal subunit protein uL18 from Streptococcus sanguinis (strain SK36).